An 828-amino-acid chain; its full sequence is Glycerol-3-phosphate acyltransferase (828 aa).

Positions 309 to 314 (CHRSHI) match the HXXXXD motif motif.

The protein belongs to the GPAT/DAPAT family.

It is found in the cell inner membrane. It carries out the reaction sn-glycerol 3-phosphate + an acyl-CoA = a 1-acyl-sn-glycero-3-phosphate + CoA. The protein operates within phospholipid metabolism; CDP-diacylglycerol biosynthesis; CDP-diacylglycerol from sn-glycerol 3-phosphate: step 1/3. This is Glycerol-3-phosphate acyltransferase from Pseudomonas putida (strain GB-1).